Consider the following 172-residue polypeptide: WW domain binding protein VOPP1 (172 aa).

Positions 1–22 (MRRQPAKVAALLLGLLLECTEA) are cleaved as a signal peptide. Over 23–60 (KKHCWYFEGLYPTYYICRSYEDCCGSRCCVRALSIQRL) the chain is Extracellular. Residues 61–81 (WYFWFLLMMGVLFCCGAGFFI) form a helical membrane-spanning segment. Over 82-172 (RRRMYPPPLI…PPYEQVVKAK (91 aa)) the chain is Cytoplasmic. The disordered stretch occupies residues 102–153 (RQPPNPGPGAQQPGPPYYTDPGGPGMNPVGNSMAMAFQVPPNSPQGSVACPP). Residues 104-119 (PPNPGPGAQQPGPPYY) show a composition bias toward pro residues.

It belongs to the VOPP1/ECOP family. As to quaternary structure, interacts with WWOX (via WW domain). As to expression, widely expressed with highest levels in thymus and ovary.

It is found in the cytoplasmic vesicle membrane. It localises to the late endosome membrane. The protein localises to the lysosome membrane. Its function is as follows. Increases the transcriptional activity of NFKB1 by facilitating its nuclear translocation, DNA-binding and associated apoptotic response, when overexpressed. May sequester WWOX in lysosomal vesicles and thereby regulate WWOX role as tumor suppressor. The protein is WW domain binding protein VOPP1 of Homo sapiens (Human).